Reading from the N-terminus, the 660-residue chain is Probable rhamnogalacturonate lyase B (660 aa).

A signal peptide spans 1-20 (MRLSVSLGLASLWTAIGATA). Residues Asn-22, Asn-27, Asn-109, Asn-142, Asn-238, Asn-284, Asn-432, Asn-492, Asn-532, Asn-594, and Asn-635 are each glycosylated (N-linked (GlcNAc...) asparagine).

It belongs to the polysaccharide lyase 4 family.

The protein localises to the secreted. The enzyme catalyses Endotype eliminative cleavage of L-alpha-rhamnopyranosyl-(1-&gt;4)-alpha-D-galactopyranosyluronic acid bonds of rhamnogalacturonan I domains in ramified hairy regions of pectin leaving L-rhamnopyranose at the reducing end and 4-deoxy-4,5-unsaturated D-galactopyranosyluronic acid at the non-reducing end.. Its function is as follows. Pectinolytic enzymes consist of four classes of enzymes: pectin lyase, polygalacturonase, pectin methylesterase and rhamnogalacturonase. Degrades the rhamnogalacturonan I (RG-I) backbone of pectin. The chain is Probable rhamnogalacturonate lyase B (rglB) from Aspergillus terreus (strain NIH 2624 / FGSC A1156).